A 336-amino-acid polypeptide reads, in one-letter code: Adenylosuccinate synthetase (336 aa).

GTP contacts are provided by residues 12–18 (GDEGKGK) and 42–44 (GHS). The active-site Proton acceptor is Asp-13. Mg(2+)-binding residues include Asp-13 and Gly-42. Residues 13-16 (DEGK), 40-43 (NAGH), Thr-127, Arg-141, Gln-179, Thr-194, and Arg-256 each bind IMP. His-43 (proton donor) is an active-site residue. 252–258 (TVTGRRR) provides a ligand contact to substrate. GTP is bound by residues Arg-258, 284–286 (CLD), and 324–326 (STG).

This sequence belongs to the adenylosuccinate synthetase family. Homodimer. Requires Mg(2+) as cofactor.

The protein localises to the cytoplasm. The enzyme catalyses IMP + L-aspartate + GTP = N(6)-(1,2-dicarboxyethyl)-AMP + GDP + phosphate + 2 H(+). The protein operates within purine metabolism; AMP biosynthesis via de novo pathway; AMP from IMP: step 1/2. Functionally, plays an important role in the de novo pathway of purine nucleotide biosynthesis. Catalyzes the first committed step in the biosynthesis of AMP from IMP. The chain is Adenylosuccinate synthetase from Methanococcus aeolicus (strain ATCC BAA-1280 / DSM 17508 / OCM 812 / Nankai-3).